The primary structure comprises 84 residues: UPF0457 protein BT9727_2307 (84 aa).

It belongs to the UPF0457 family.

The chain is UPF0457 protein BT9727_2307 from Bacillus thuringiensis subsp. konkukian (strain 97-27).